Consider the following 271-residue polypeptide: Interleukin-1 alpha (271 aa).

Positions 1-112 are excised as a propeptide; that stretch reads MAKVPDMFED…DSEEEIIKPR (112 aa). K82 is subject to N6-acetyllysine. Residues 82–86 are nuclear localization signal (NLS); it reads KKRRL. S87 carries the phosphoserine modification. Residues N102, N121, N137, and N141 are each glycosylated (N-linked (GlcNAc...) asparagine).

The protein belongs to the IL-1 family. Monomer. Interacts with TMED10; the interaction mediates the translocation from the cytoplasm into the ERGIC (endoplasmic reticulum-Golgi intermediate compartment) and thereby secretion. Interacts with IL1R1. Interacts with S100A13; this interaction is the first step in the export of IL1A, followed by direct translocation of this complex across the plasma membrane. In terms of processing, acetylated within its nuclear localization sequence, which impacts subcellular localization. Post-translationally, proteolytic processed by CAPN1 in a calcium-dependent manner. Cleavage from 31 kDa precursor to 18 kDa biologically active molecules. Phosphorylated. Phosphorylation greatly enhances susceptibility to digestion and promotes the conversion of pre-IL1A alpha to the biologically active IL1A.

The protein localises to the nucleus. The protein resides in the cytoplasm. Its subcellular location is the secreted. Functionally, cytokine constitutively present intracellularly in nearly all resting non-hematopoietic cells that plays an important role in inflammation and bridges the innate and adaptive immune systems. After binding to its receptor IL1R1 together with its accessory protein IL1RAP, forms the high affinity interleukin-1 receptor complex. Signaling involves the recruitment of adapter molecules such as MYD88, IRAK1 or IRAK4. In turn, mediates the activation of NF-kappa-B and the three MAPK pathways p38, p42/p44 and JNK pathways. Within the cell, acts as an alarmin and cell death results in its liberation in the extracellular space after disruption of the cell membrane to induce inflammation and alert the host to injury or damage. In addition to its role as a danger signal, which occurs when the cytokine is passively released by cell necrosis, directly senses DNA damage and acts as signal for genotoxic stress without loss of cell integrity. This chain is Interleukin-1 alpha (IL1A), found in Macaca fascicularis (Crab-eating macaque).